The primary structure comprises 135 residues: Large ribosomal subunit protein uL16 (135 aa).

Belongs to the universal ribosomal protein uL16 family. In terms of assembly, part of the 50S ribosomal subunit.

In terms of biological role, binds 23S rRNA and is also seen to make contacts with the A and possibly P site tRNAs. This chain is Large ribosomal subunit protein uL16 (rplP), found in Carsonella ruddii (strain PV).